The primary structure comprises 201 residues: ATP-dependent Clp protease proteolytic subunit (201 aa).

Serine 103 acts as the Nucleophile in catalysis. Histidine 128 is an active-site residue.

It belongs to the peptidase S14 family. Fourteen ClpP subunits assemble into 2 heptameric rings which stack back to back to give a disk-like structure with a central cavity, resembling the structure of eukaryotic proteasomes.

The protein resides in the cytoplasm. It catalyses the reaction Hydrolysis of proteins to small peptides in the presence of ATP and magnesium. alpha-casein is the usual test substrate. In the absence of ATP, only oligopeptides shorter than five residues are hydrolyzed (such as succinyl-Leu-Tyr-|-NHMec, and Leu-Tyr-Leu-|-Tyr-Trp, in which cleavage of the -Tyr-|-Leu- and -Tyr-|-Trp bonds also occurs).. Cleaves peptides in various proteins in a process that requires ATP hydrolysis. Has a chymotrypsin-like activity. Plays a major role in the degradation of misfolded proteins. The sequence is that of ATP-dependent Clp protease proteolytic subunit from Bordetella avium (strain 197N).